Reading from the N-terminus, the 196-residue chain is Blue copper protein (196 aa).

Residues 1-22 (MAGVFKTVTFLVLVFAAVVVFA) form the signal peptide. Positions 23–125 (EDYDVGDDTE…GQKLSITVVA (103 aa)) constitute a Phytocyanin domain. Histidine 66 contributes to the Cu cation binding site. A disulfide bridge links cysteine 79 with cysteine 113. Residue asparagine 98 is glycosylated (N-linked (GlcNAc...) asparagine). Residues cysteine 107, histidine 112, and glutamine 117 each coordinate Cu cation. A disordered region spans residues 133–173 (TPGAGATPAPGSTPSTGGTTPPTAGGTTTPSGSSGTTTPAG). The span at 135–173 (GAGATPAPGSTPSTGGTTPPTAGGTTTPSGSSGTTTPAG) shows a compositional bias: low complexity. Residue asparagine 174 is the site of GPI-anchor amidated asparagine attachment. The propeptide at 175 to 196 (AASSLGGATFLVAFVSAVVALF) is removed in mature form.

The protein localises to the cell membrane. Its function is as follows. Probably acts as an electron carrier. This chain is Blue copper protein (BCB), found in Arabidopsis thaliana (Mouse-ear cress).